The primary structure comprises 56 residues: UPF0434 protein CBUD_1597.1 (56 aa).

Belongs to the UPF0434 family.

This Coxiella burnetii (strain Dugway 5J108-111) protein is UPF0434 protein CBUD_1597.1.